The chain runs to 689 residues: DNA ligase (689 aa).

NAD(+) is bound by residues 51 to 55, 100 to 101, and Glu-129; these read DSEYD and SL. The active-site N6-AMP-lysine intermediate is Lys-131. NAD(+) is bound by residues Arg-152, Glu-189, Lys-308, and Lys-332. Residues Cys-426, Cys-429, Cys-444, and Cys-450 each coordinate Zn(2+). The BRCT domain occupies 609–689; that stretch reads ADEQPLKGQT…ELLALLAANS (81 aa).

The protein belongs to the NAD-dependent DNA ligase family. LigA subfamily. Requires Mg(2+) as cofactor. Mn(2+) is required as a cofactor.

It carries out the reaction NAD(+) + (deoxyribonucleotide)n-3'-hydroxyl + 5'-phospho-(deoxyribonucleotide)m = (deoxyribonucleotide)n+m + AMP + beta-nicotinamide D-nucleotide.. DNA ligase that catalyzes the formation of phosphodiester linkages between 5'-phosphoryl and 3'-hydroxyl groups in double-stranded DNA using NAD as a coenzyme and as the energy source for the reaction. It is essential for DNA replication and repair of damaged DNA. The sequence is that of DNA ligase from Shewanella sp. (strain ANA-3).